The chain runs to 625 residues: Isocitrate dehydrogenase kinase/phosphatase (625 aa).

Residues 325–331 and lysine 346 each bind ATP; that span reads APGIKGM. Aspartate 381 is an active-site residue. Positions 596 to 625 are disordered; that stretch reads RRHSPGRNDHELLTHLPPEPMLTGLSGMTP.

This sequence belongs to the AceK family.

The protein resides in the cytoplasm. The enzyme catalyses L-seryl-[isocitrate dehydrogenase] + ATP = O-phospho-L-seryl-[isocitrate dehydrogenase] + ADP + H(+). Functionally, bifunctional enzyme which can phosphorylate or dephosphorylate isocitrate dehydrogenase (IDH) on a specific serine residue. This is a regulatory mechanism which enables bacteria to bypass the Krebs cycle via the glyoxylate shunt in response to the source of carbon. When bacteria are grown on glucose, IDH is fully active and unphosphorylated, but when grown on acetate or ethanol, the activity of IDH declines drastically concomitant with its phosphorylation. The protein is Isocitrate dehydrogenase kinase/phosphatase of Polaromonas sp. (strain JS666 / ATCC BAA-500).